Consider the following 152-residue polypeptide: Deoxyuridine 5'-triphosphate nucleotidohydrolase (152 aa).

Residues 71-73 (RSG), Asn-84, 88-90 (LID), and Met-98 each bind substrate.

The protein belongs to the dUTPase family. Mg(2+) serves as cofactor.

The enzyme catalyses dUTP + H2O = dUMP + diphosphate + H(+). It functions in the pathway pyrimidine metabolism; dUMP biosynthesis; dUMP from dCTP (dUTP route): step 2/2. In terms of biological role, this enzyme is involved in nucleotide metabolism: it produces dUMP, the immediate precursor of thymidine nucleotides and it decreases the intracellular concentration of dUTP so that uracil cannot be incorporated into DNA. The sequence is that of Deoxyuridine 5'-triphosphate nucleotidohydrolase from Shewanella sp. (strain ANA-3).